The sequence spans 160 residues: Serine-protein kinase RsbW (160 aa).

This sequence belongs to the anti-sigma-factor family.

The enzyme catalyses L-seryl-[protein] + ATP = O-phospho-L-seryl-[protein] + ADP + H(+). The catalysed reaction is L-threonyl-[protein] + ATP = O-phospho-L-threonyl-[protein] + ADP + H(+). Negative regulator of sigma-B activity. Phosphorylates and inactivates its specific antagonist protein, RsbV. Upon phosphorylation of RsbV, RsbW is released and binds to sigma-B, thereby blocking its ability to form an RNA polymerase holoenzyme (E-sigma-B). This Bacillus cereus (strain G9842) protein is Serine-protein kinase RsbW.